The chain runs to 331 residues: Probable allantoicase (331 aa).

This sequence belongs to the allantoicase family.

It carries out the reaction allantoate + H2O = (S)-ureidoglycolate + urea. It participates in nitrogen metabolism; (S)-allantoin degradation; (S)-ureidoglycolate from allantoate (aminidohydrolase route): step 1/1. The polypeptide is Probable allantoicase (Pseudomonas fluorescens (strain Pf0-1)).